Consider the following 64-residue polypeptide: Putative antitoxin AF_1074 (64 aa).

It belongs to the UPF0165 family.

Possibly the antitoxin component of a type II toxin-antitoxin (TA) system. The protein is Putative antitoxin AF_1074 of Archaeoglobus fulgidus (strain ATCC 49558 / DSM 4304 / JCM 9628 / NBRC 100126 / VC-16).